A 161-amino-acid chain; its full sequence is 3-hydroxyacyl-[acyl-carrier-protein] dehydratase FabZ (161 aa).

Residue His55 is part of the active site.

This sequence belongs to the thioester dehydratase family. FabZ subfamily.

Its subcellular location is the cytoplasm. It carries out the reaction a (3R)-hydroxyacyl-[ACP] = a (2E)-enoyl-[ACP] + H2O. Functionally, involved in unsaturated fatty acids biosynthesis. Catalyzes the dehydration of short chain beta-hydroxyacyl-ACPs and long chain saturated and unsaturated beta-hydroxyacyl-ACPs. In Jannaschia sp. (strain CCS1), this protein is 3-hydroxyacyl-[acyl-carrier-protein] dehydratase FabZ.